The sequence spans 318 residues: Protoheme IX farnesyltransferase (318 aa).

Helical transmembrane passes span V37–P57, I59–F79, E108–A128, L131–L151, N158–T178, W183–L203, V216–A238, L249–L269, and I296–L316.

The protein belongs to the UbiA prenyltransferase family. Protoheme IX farnesyltransferase subfamily.

It localises to the cell membrane. The enzyme catalyses heme b + (2E,6E)-farnesyl diphosphate + H2O = Fe(II)-heme o + diphosphate. It functions in the pathway porphyrin-containing compound metabolism; heme O biosynthesis; heme O from protoheme: step 1/1. Converts heme B (protoheme IX) to heme O by substitution of the vinyl group on carbon 2 of heme B porphyrin ring with a hydroxyethyl farnesyl side group. This Renibacterium salmoninarum (strain ATCC 33209 / DSM 20767 / JCM 11484 / NBRC 15589 / NCIMB 2235) protein is Protoheme IX farnesyltransferase.